We begin with the raw amino-acid sequence, 968 residues long: Serine/threonine-protein kinase apg-1 (968 aa).

A Protein kinase domain is found at 24–329; the sequence is FVIDQEIGKG…FEDLFNHPVV (306 aa). ATP-binding positions include 30–38 and Lys53; that span reads IGKGSFAKV. Residue Asp167 is the Proton acceptor of the active site. Disordered regions lie at residues 334-500, 528-585, 884-906, and 939-968; these read PGLV…ERAA, MYPQ…LGTS, LPKRKVSGASKEEKTGANELSDE, and ASKAQQQEEQKQQNLMRRRSGEMTSRSVPA. 3 stretches are compositionally biased toward basic and acidic residues: residues 350–361, 371–380, and 417–431; these read LKEERPVSRAED, LRKDLADREG, and PREDRLSYSPRKEAA. 3 stretches are compositionally biased toward polar residues: residues 441 to 452, 528 to 538, and 545 to 557; these read VQPSTSAPTRPS, MYPQQPQSPKS, and ATQQGSPTSTSGA.

It belongs to the protein kinase superfamily. Ser/Thr protein kinase family. APG1/unc-51/ULK1 subfamily. As to quaternary structure, homodimer. Forms a ternary complex with ATG13 and ATG17.

Its subcellular location is the cytoplasm. It is found in the preautophagosomal structure membrane. The enzyme catalyses L-seryl-[protein] + ATP = O-phospho-L-seryl-[protein] + ADP + H(+). It carries out the reaction L-threonyl-[protein] + ATP = O-phospho-L-threonyl-[protein] + ADP + H(+). Serine/threonine protein kinase involved in the cytoplasm to vacuole transport (Cvt) and found to be essential in autophagy, where it is required for the formation of autophagosomes. Involved in the clearance of protein aggregates which cannot be efficiently cleared by the proteasome. Required for selective autophagic degradation of the nucleus (nucleophagy) as well as for mitophagy which contributes to regulate mitochondrial quantity and quality by eliminating the mitochondria to a basal level to fulfill cellular energy requirements and preventing excess ROS production. Also involved in endoplasmic reticulum-specific autophagic process, in selective removal of ER-associated degradation (ERAD) substrates. Plays a key role in ATG9 and ATG23 cycling through the pre-autophagosomal structure and is necessary to promote ATG18 binding to ATG9 through phosphorylation of ATG9. Catalyzes phosphorylation of ATG4, decreasing the interaction between ATG4 and ATG8 and impairing deconjugation of PE-conjugated forms of ATG8. This is Serine/threonine-protein kinase apg-1 from Neurospora crassa (strain ATCC 24698 / 74-OR23-1A / CBS 708.71 / DSM 1257 / FGSC 987).